The chain runs to 324 residues: Phosphomevalonate decarboxylase (324 aa).

This sequence belongs to the phosphomevalonate decarboxylase family.

The catalysed reaction is (R)-5-phosphomevalonate + ATP = isopentenyl phosphate + ADP + phosphate + CO2. Its activity is regulated as follows. Is strongly inhibited by 6-fluoromevalonate monophosphate but shows negligible inhibition by 6-fluoromevalonate diphosphate (a potent inhibitor of the classical mevalonate pathway). In terms of biological role, catalyzes the decarboxylation of mevalonate 5-phosphate (MVAP) to isopentenyl phosphate (IP). Functions in an alternate mevalonate (MVA) pathway leading to isopentenyl diphosphate (IPP), a key precursor for the biosynthesis of isoprenoid compounds such as archaeal membrane lipids. This chain is Phosphomevalonate decarboxylase (mvaD), found in Haloferax volcanii (strain ATCC 29605 / DSM 3757 / JCM 8879 / NBRC 14742 / NCIMB 2012 / VKM B-1768 / DS2) (Halobacterium volcanii).